Consider the following 434-residue polypeptide: Exopolygalacturonase X-1 (434 aa).

Residues 1–22 (MKLSHLLTSAVSVLSLGLTVEG) form the signal peptide. N-linked (GlcNAc...) asparagine glycosylation is found at Asn-113, Asn-129, and Asn-199. Residues 231-252 (SKNIVIQNSVINNGDDCVSFKP) form a PbH1 1 repeat. Asp-245 acts as the Proton donor in catalysis. A disulfide bond links Cys-247 and Cys-264. N-linked (GlcNAc...) asparagine glycans are attached at residues Asn-253 and Asn-265. One copy of the PbH1 2 repeat lies at 254-274 (STEILVQNLYCNGSHGISVGS). The active site involves His-268. Residues Asn-292, Asn-297, Asn-329, Asn-354, and Asn-364 are each glycosylated (N-linked (GlcNAc...) asparagine). Residues 327 to 348 (VSNITYEDMYIENVDWAIEITQ) form a PbH1 3 repeat. One copy of the PbH1 4 repeat lies at 362-405 (PSNLTISDVYISNMYGTTSSARDPNIGTIVCSSPDVCSNIYVEN). Residues Cys-392 and Cys-398 are joined by a disulfide bond. Residues Asn-423 and Asn-430 are each glycosylated (N-linked (GlcNAc...) asparagine).

Belongs to the glycosyl hydrolase 28 family.

It localises to the secreted. The enzyme catalyses [(1-&gt;4)-alpha-D-galacturonosyl](n) + H2O = alpha-D-galacturonate + [(1-&gt;4)-alpha-D-galacturonosyl](n-1). Its function is as follows. Specific in hydrolyzing the terminal glycosidic bond of polygalacturonic acid and oligogalacturonates. This chain is Exopolygalacturonase X-1 (pgaX-1), found in Emericella nidulans (strain FGSC A4 / ATCC 38163 / CBS 112.46 / NRRL 194 / M139) (Aspergillus nidulans).